A 158-amino-acid polypeptide reads, in one-letter code: SsrA-binding protein (158 aa).

Residues 133–152 (KRQTLREQQDNREAQREMRE) are compositionally biased toward basic and acidic residues. The interval 133 to 158 (KRQTLREQQDNREAQREMRERNRRRG) is disordered.

It belongs to the SmpB family.

The protein resides in the cytoplasm. Its function is as follows. Required for rescue of stalled ribosomes mediated by trans-translation. Binds to transfer-messenger RNA (tmRNA), required for stable association of tmRNA with ribosomes. tmRNA and SmpB together mimic tRNA shape, replacing the anticodon stem-loop with SmpB. tmRNA is encoded by the ssrA gene; the 2 termini fold to resemble tRNA(Ala) and it encodes a 'tag peptide', a short internal open reading frame. During trans-translation Ala-aminoacylated tmRNA acts like a tRNA, entering the A-site of stalled ribosomes, displacing the stalled mRNA. The ribosome then switches to translate the ORF on the tmRNA; the nascent peptide is terminated with the 'tag peptide' encoded by the tmRNA and targeted for degradation. The ribosome is freed to recommence translation, which seems to be the essential function of trans-translation. The protein is SsrA-binding protein of Pseudarthrobacter chlorophenolicus (strain ATCC 700700 / DSM 12829 / CIP 107037 / JCM 12360 / KCTC 9906 / NCIMB 13794 / A6) (Arthrobacter chlorophenolicus).